The primary structure comprises 171 residues: Crossover junction endodeoxyribonuclease RuvC (171 aa).

Residues D7, E66, and D138 contribute to the active site. The Mg(2+) site is built by D7, E66, and D138.

This sequence belongs to the RuvC family. Homodimer which binds Holliday junction (HJ) DNA. The HJ becomes 2-fold symmetrical on binding to RuvC with unstacked arms; it has a different conformation from HJ DNA in complex with RuvA. In the full resolvosome a probable DNA-RuvA(4)-RuvB(12)-RuvC(2) complex forms which resolves the HJ. It depends on Mg(2+) as a cofactor.

The protein localises to the cytoplasm. It catalyses the reaction Endonucleolytic cleavage at a junction such as a reciprocal single-stranded crossover between two homologous DNA duplexes (Holliday junction).. Its function is as follows. The RuvA-RuvB-RuvC complex processes Holliday junction (HJ) DNA during genetic recombination and DNA repair. Endonuclease that resolves HJ intermediates. Cleaves cruciform DNA by making single-stranded nicks across the HJ at symmetrical positions within the homologous arms, yielding a 5'-phosphate and a 3'-hydroxyl group; requires a central core of homology in the junction. The consensus cleavage sequence is 5'-(A/T)TT(C/G)-3'. Cleavage occurs on the 3'-side of the TT dinucleotide at the point of strand exchange. HJ branch migration catalyzed by RuvA-RuvB allows RuvC to scan DNA until it finds its consensus sequence, where it cleaves and resolves the cruciform DNA. The chain is Crossover junction endodeoxyribonuclease RuvC from Francisella philomiragia subsp. philomiragia (strain ATCC 25017 / CCUG 19701 / FSC 153 / O#319-036).